A 362-amino-acid polypeptide reads, in one-letter code: Heat-inducible transcription repressor HrcA (362 aa).

Belongs to the HrcA family.

Its function is as follows. Negative regulator of class I heat shock genes (grpE-dnaK-dnaJ and groELS operons). Prevents heat-shock induction of these operons. The sequence is that of Heat-inducible transcription repressor HrcA from Bradyrhizobium diazoefficiens (strain JCM 10833 / BCRC 13528 / IAM 13628 / NBRC 14792 / USDA 110).